We begin with the raw amino-acid sequence, 312 residues long: Beta-ketoacyl-[acyl-carrier-protein] synthase III (312 aa).

Residues Cys-112 and His-237 contribute to the active site. The interval 238–242 is ACP-binding; it reads QANIR. Residue Asn-267 is part of the active site.

This sequence belongs to the thiolase-like superfamily. FabH family. As to quaternary structure, homodimer.

Its subcellular location is the cytoplasm. It catalyses the reaction malonyl-[ACP] + acetyl-CoA + H(+) = 3-oxobutanoyl-[ACP] + CO2 + CoA. Its pathway is lipid metabolism; fatty acid biosynthesis. Catalyzes the condensation reaction of fatty acid synthesis by the addition to an acyl acceptor of two carbons from malonyl-ACP. Catalyzes the first condensation reaction which initiates fatty acid synthesis and may therefore play a role in governing the total rate of fatty acid production. Possesses both acetoacetyl-ACP synthase and acetyl transacylase activities. Its substrate specificity determines the biosynthesis of branched-chain and/or straight-chain of fatty acids. The protein is Beta-ketoacyl-[acyl-carrier-protein] synthase III of Bacillus pumilus (strain SAFR-032).